The primary structure comprises 1522 residues: Rho guanine nucleotide exchange factor 11 (1522 aa).

The interval 1 to 40 (MSVRLPQSIDRLSSLSSLGDSAPERKSPSHHRQPSDASET) is disordered. Residues serine 2, serine 14, serine 16, and serine 35 each carry the phosphoserine modification. The PDZ domain occupies 47-126 (CVIIQKDQHG…LTLLGSSPSS (80 aa)). Disordered stretches follow at residues 128–175 (GISG…PEVQ) and 200–231 (YGDT…ERFP). The span at 149-161 (PSPPPPPPLPPPQ) shows a compositional bias: pro residues. Phosphoserine occurs at positions 245 and 251. The residue at position 254 (threonine 254) is a Phosphothreonine. Residues serine 255 and serine 271 each carry the phosphoserine modification. Positions 263 to 286 (AQHHRRQGSDAAVPSTGDQGVDQS) are disordered. The RGSL domain occupies 306-486 (ESDIIFQDLE…NTYMSHAGIR (181 aa)). Positions 444–470 (LRERQVAEKQLAALGDILSKYEEDRSA) form a coiled coil. The interval 490 to 555 (ARPSNTAEKA…SSQSTFHIPL (66 aa)) is disordered. A compositionally biased stretch (basic and acidic residues) spans 521-533 (SKKEKDALEDKKR). Serine 556, serine 635, and serine 663 each carry phosphoserine. The segment at 573-680 (ENNQQYDAPE…FTPKMGRRSI (108 aa)) is disordered. Residues 601-637 (DSSRSEIRLGRSESLKGREEMKRSRKAENVPRSRSDV) show a composition bias toward basic and acidic residues. Over residues 651 to 664 (SASSSTSSLSTRSL) the composition is skewed to low complexity. Phosphothreonine occurs at positions 668 and 672. One can recognise a DH domain in the interval 734 to 923 (DRQEVINELF…REILKYVNEA (190 aa)). The region spanning 965–1079 (KMIHEGPLTW…WMELLEEAVR (115 aa)) is the PH domain. Residues 1084-1141 (HPGAAPMPVHPPPPGPREPAQQGPTPSRVELDDSDVFHGEPEPEELPGGTGSQQRVQG) form a disordered region. The segment covering 1091–1100 (PVHPPPPGPR) has biased composition (pro residues). Residues 1112 to 1124 (VELDDSDVFHGEP) show a composition bias toward basic and acidic residues. Serine 1155 carries the post-translational modification Phosphoserine. Disordered stretches follow at residues 1223–1320 (ETQA…AGGY), 1332–1423 (KVVP…RDVG), and 1453–1522 (LGGE…SPGP). The segment covering 1236 to 1245 (PTPSVISVTS) has biased composition (polar residues). 2 positions are modified to phosphoserine: serine 1295 and serine 1300. Residues 1338-1353 (PESGQSEPGPPEVEGG) are compositionally biased toward low complexity. 2 positions are modified to phosphoserine: serine 1457 and serine 1458. Threonine 1462 and threonine 1475 each carry phosphothreonine. Position 1480 is a phosphoserine (serine 1480). The segment covering 1503-1513 (DGSDAPLEDST) has biased composition (acidic residues).

Interacts with GNA12 and GNA13 through the RGS domain. Interacts with RHOA, PLXNB1 and PLXNB2. Interacts with SLC1A6. Interacts (via DH domain) with GCSAM (via C-terminus). Found in a complex with ARHGEF11 and ARHGEF12; binding to ARHGEF11 and ARHGEF12 enhances CDC42 GEF activity of PLEKHG4B, and PLEKHG4B, in turn, inhibits ARHGEF11- and ARHGEF12-mediated RHOA activation. Phosphorylated by MAP kinase p38 (MAPK11, MAPK12, MAPK13 and/or MAPK14). Post-translationally, ubiquitinated by the BCR(KLHL20) E3 ubiquitin ligase complex when previously phosphorylated by MAP kinase p38 (MAPK11, MAPK12, MAPK13 and/or MAPK14), leading to its degradation, thereby restricting RhoA activity and facilitating growth cone spreading and neurite outgrowth. Ubiquitously expressed.

The protein resides in the cytoplasm. It is found in the membrane. Its function is as follows. May play a role in the regulation of RhoA GTPase by guanine nucleotide-binding alpha-12 (GNA12) and alpha-13 (GNA13). Acts as guanine nucleotide exchange factor (GEF) for RhoA GTPase and may act as GTPase-activating protein (GAP) for GNA12 and GNA13. Involved in neurotrophin-induced neurite outgrowth. In Homo sapiens (Human), this protein is Rho guanine nucleotide exchange factor 11 (ARHGEF11).